We begin with the raw amino-acid sequence, 103 residues long: Phospholipase A2 large subunit (103 aa).

The Ca(2+) site is built by Trp7, Gly9, and Gly11. Intrachain disulfides connect Cys8/Cys30, Cys29/Cys68, Cys36/Cys61, and Cys59/Cys96. A glycan (N-linked (GlcNAc...) asparagine) is linked at Asn16. The active site involves His33. A Ca(2+)-binding site is contributed by Asp34.

Belongs to the phospholipase A2 family. Group III subfamily. In terms of assembly, heterodimer composed of a large subunit and a small subunit; disulfide-linked. Ca(2+) is required as a cofactor. As to expression, expressed by the venom gland.

The protein resides in the secreted. The enzyme catalyses a 1,2-diacyl-sn-glycero-3-phosphocholine + H2O = a 1-acyl-sn-glycero-3-phosphocholine + a fatty acid + H(+). Functionally, phospholipase toxin, which catalyzes the calcium-dependent hydrolysis of the 2-acyl groups in 3-sn-phosphoglycerides. Inhibits both skeletal (RYR1) and cardiac (RYR2) ryanodine receptors (calcium release channels). Probably blocks ryanodine receptors by generating a lipid product. This is Phospholipase A2 large subunit from Chersonesometrus fulvipes (Indian black scorpion).